The primary structure comprises 61 residues: Short neurotoxin 2 (61 aa).

Disulfide bonds link Cys-3/Cys-23, Cys-17/Cys-40, Cys-42/Cys-53, and Cys-54/Cys-59.

The protein belongs to the three-finger toxin family. Short-chain subfamily. Type I alpha-neurotoxin sub-subfamily. In terms of tissue distribution, expressed by the venom gland.

It is found in the secreted. Its function is as follows. Binds to muscle nicotinic acetylcholine receptor (nAChR) and inhibit acetylcholine from binding to the receptor, thereby impairing neuromuscular transmission. The chain is Short neurotoxin 2 from Naja annulifera (Banded Egyptian cobra).